The chain runs to 464 residues: ATP synthase subunit beta (464 aa).

153–160 (GGAGVGKT) serves as a coordination point for ATP.

This sequence belongs to the ATPase alpha/beta chains family. In terms of assembly, F-type ATPases have 2 components, CF(1) - the catalytic core - and CF(0) - the membrane proton channel. CF(1) has five subunits: alpha(3), beta(3), gamma(1), delta(1), epsilon(1). CF(0) has three main subunits: a(1), b(2) and c(9-12). The alpha and beta chains form an alternating ring which encloses part of the gamma chain. CF(1) is attached to CF(0) by a central stalk formed by the gamma and epsilon chains, while a peripheral stalk is formed by the delta and b chains.

It is found in the cell inner membrane. It catalyses the reaction ATP + H2O + 4 H(+)(in) = ADP + phosphate + 5 H(+)(out). Functionally, produces ATP from ADP in the presence of a proton gradient across the membrane. The catalytic sites are hosted primarily by the beta subunits. The chain is ATP synthase subunit beta from Burkholderia cenocepacia (strain ATCC BAA-245 / DSM 16553 / LMG 16656 / NCTC 13227 / J2315 / CF5610) (Burkholderia cepacia (strain J2315)).